The primary structure comprises 274 residues: Rhamnulose-1-phosphate aldolase (274 aa).

Residue Glu-117 is part of the active site. 3 residues coordinate Zn(2+): His-141, His-143, and His-212.

This sequence belongs to the aldolase class II family. RhaD subfamily. Homotetramer. It depends on Zn(2+) as a cofactor.

The protein localises to the cytoplasm. It carries out the reaction L-rhamnulose 1-phosphate = (S)-lactaldehyde + dihydroxyacetone phosphate. It participates in carbohydrate degradation; L-rhamnose degradation; glycerone phosphate from L-rhamnose: step 3/3. Its function is as follows. Catalyzes the reversible cleavage of L-rhamnulose-1-phosphate to dihydroxyacetone phosphate (DHAP) and L-lactaldehyde. The protein is Rhamnulose-1-phosphate aldolase of Shigella sonnei (strain Ss046).